Consider the following 185-residue polypeptide: Ribosome maturation factor RimP (185 aa).

Positions Val162–Arg185 are disordered.

This sequence belongs to the RimP family.

The protein resides in the cytoplasm. In terms of biological role, required for maturation of 30S ribosomal subunits. The sequence is that of Ribosome maturation factor RimP from Saccharopolyspora erythraea (strain ATCC 11635 / DSM 40517 / JCM 4748 / NBRC 13426 / NCIMB 8594 / NRRL 2338).